The chain runs to 1026 residues: MEEQVANAIEIAWNPSSDQALKAQAFDYLNQLRTDPSGWQVCLALFTKTPQHSEIIRHVALEVVNSAAQAGLIDPQALGYVRDGLMNYLRQVYGQENANPDPPNIQNKIAQTITFLFSALYGSGWESFFDDLLSLTYKGASSTSPDNMLGIVFYLRVVNSIHDEIGDVLVSRSRTEQDRANSLKDLIRMRDMQKIASSWQQILSEWRDGNDLIVEMCLKAVGSWVGWIDISLVVNQTMLDLLFQQLARAQKAELRAGEEKVRDAAVDVFTEIIGKKMKPEDKIDMIIFLNLDTIVSQLSNSPPLCENRFTFKYDTDLAETVAKLVNSTVVDIVRALEQENISAECREKANGLLQAFLPHILRYFSDEYDEVCSTVIPCGSDLLQYLRKVSKTDPSLTAQHSPILLPILKAIIAKMRYDETSSWGDEDDQTDEAEFQELRKRLAIMQQTVASVNEQLYIDAVSEVVATTFENLRQSGAQLDWRDLDLALHEMFLFGDIAVKAGSLYTKNQPNNQAAERLIEMMSRMVESDIRSFTHPATQLQYMEICVRYSSFFLYHTNLIPGVLESFLQLVHHPTKKVKTRSWYLFQRLVKQLRSHIGNVAQTVVQALGDLLVIQAEIPTEGADGDEMSSEDHEGSADAVFNSQLYLFEAVGIICSTPTVAADKQVLYVQSVLNPVFMDMEKNLAPAKSNDERALLQIHHDIMALGTLAKGFSDWMPGTSSPTSLPAPEVSEAFLQVSEATLVALESLKTSFNIRTAARFAFSRLIGVLGSRILPQLPRWIDGLLTQTSTRDEMALFLRLLDQVIFGFKGEIYAILDTLLTPFLQRVFAGIADPTTGTDDEIQLAELKREYLNFLLAVLNNDLGAVIISERNQPMFDTVITTIEHFAKDIEDFTTAKMAFSVLSKMGSSWGGPDIAPEATNGASQQVALPGFAQFMISRMSPLCWALPATPSFNPKDAQAKQVLAEAGGLQRTIYCKTGMEYIQYLRDQELPGMGMGGELIEEFLNALGQLDLKGFRQFFPVCTAR.

Belongs to the exportin family.

It localises to the nucleus. The protein resides in the cytoplasm. In terms of biological role, tRNA nucleus export receptor which facilitates tRNA translocation across the nuclear pore complex. Involved in pre-tRNA splicing, probably by affecting the interaction of pre-tRNA with splicing endonuclease. The protein is Exportin-T (los1) of Aspergillus oryzae (strain ATCC 42149 / RIB 40) (Yellow koji mold).